A 65-amino-acid chain; its full sequence is Large ribosomal subunit protein bL35 (65 aa).

A disordered region spans residues 1 to 65 (MPKMKTNRAA…GRLDRMLPYL (65 aa)). A compositionally biased stretch (basic residues) spans 10–44 (AAKRFRKTASGKYKAGHANRSHILTKKATKRKRNL). Over residues 50-65 (VRAEDAGRLDRMLPYL) the composition is skewed to basic and acidic residues.

This sequence belongs to the bacterial ribosomal protein bL35 family.

This Xylella fastidiosa (strain M12) protein is Large ribosomal subunit protein bL35.